The primary structure comprises 289 residues: Heme oxygenase 1 (289 aa).

Residues 1-266 (MERPQLDSMS…SQISTSSSQT (266 aa)) lie on the Cytoplasmic side of the membrane. Residues Lys18, His25, Tyr134, and Arg183 each coordinate heme b. The tract at residues 225–261 (HKDQSPSQTEFLRQRPASLVQDTTSAETPRGKSQIST) is disordered. Ser229 and Ser242 each carry phosphoserine. The segment covering 244 to 261 (VQDTTSAETPRGKSQIST) has biased composition (polar residues). A helical; Anchor for type IV membrane protein transmembrane segment spans residues 267–289 (PLLRWVLTLSFLLATVAVGIYAM).

It belongs to the heme oxygenase family. As to quaternary structure, homodimer and higher order homooligomer. Oligomerization is crucial for its stability and function in the endoplasmic reticulum. Interacts with FLVCR2; this interaction is potentiated in the presence of heme. A soluble form arises by proteolytic removal of the membrane anchor.

It is found in the endoplasmic reticulum membrane. It carries out the reaction heme b + 3 reduced [NADPH--hemoprotein reductase] + 3 O2 = biliverdin IXalpha + CO + Fe(2+) + 3 oxidized [NADPH--hemoprotein reductase] + 3 H2O + H(+). Inhibited by metalloporphyrins such as Sn- and Zn-protoporphyrins. In terms of biological role, catalyzes the oxidative cleavage of heme at the alpha-methene bridge carbon, released as carbon monoxide (CO), to generate biliverdin IXalpha, while releasing the central heme iron chelate as ferrous iron. Affords protection against programmed cell death and this cytoprotective effect relies on its ability to catabolize free heme and prevent it from sensitizing cells to undergo apoptosis. Its function is as follows. Catalyzes the oxidative cleavage of heme at the alpha-methene bridge carbon, released as carbon monoxide (CO), to generate biliverdin IXalpha, while releasing the central heme iron chelate as ferrous iron. This chain is Heme oxygenase 1 (Hmox1), found in Rattus norvegicus (Rat).